The sequence spans 500 residues: E3 ubiquitin-protein ligase TRIM69 (500 aa).

Residues 1–22 form a disordered region; that stretch reads MEVSSRPPSNFDPGNYVEMSDP. The necessary for nuclear localization stretch occupies residues 1–153; sequence MEVSSRPPSN…SMGQSKDFLQ (153 aa). The segment at 42–83 adopts an RING-type zinc-finger fold; sequence CPLCNDWFRDPLMLTCGHNFCQDCIQSFWKVHSKETFCPDCK. The stretch at 217–256 forms a coiled coil; sequence NKEKDILNDLRDEGKLLNEEMEVNLNQIQEQCLVAKDMLA. In terms of domain architecture, B30.2/SPRY spans 306–500; it reads PIQYIIWKEM…KEPLHIVHPQ (195 aa). S342 bears the Phosphoserine mark.

This sequence belongs to the TRIM/RBCC family. Homo-multimer; required for antiviral activity. Interacts with PML. Phosphorylated. Phosphorylation is necessary for nuclear localization. Expressed in spermatid.

It is found in the cytoplasm. It localises to the nucleus. The protein resides in the nucleus speckle. Its subcellular location is the cytoskeleton. The protein localises to the microtubule organizing center. It is found in the centrosome. It carries out the reaction S-ubiquitinyl-[E2 ubiquitin-conjugating enzyme]-L-cysteine + [acceptor protein]-L-lysine = [E2 ubiquitin-conjugating enzyme]-L-cysteine + N(6)-ubiquitinyl-[acceptor protein]-L-lysine.. Its pathway is protein modification; protein ubiquitination. In terms of biological role, E3 ubiquitin ligase that plays an important role in antiviral immunity by restricting different viral infections including dengue virus or vesicular stomatitis indiana virus. Ubiquitinates viral proteins such as dengue virus NS3 thereby limiting infection. In addition, acts as a key mediator of type I interferon induced microtubule stabilization by directly associating to microtubules independently of its E3 ligase activity. Also plays a role in cataract formation together with TP53. Mechanistically, inhibits UVB-induced cell apoptosis and reactive oxygen species (ROS) production by inducing TP53 ubiquitination. Regulates centrosome dynamics and mitotic progression by ubiquitinating STK3/MST2; leading to its redistribution to the perinuclear cytoskeleton and subsequent phosphorylation by PLK1. The sequence is that of E3 ubiquitin-protein ligase TRIM69 (Trim69) from Mus musculus (Mouse).